The chain runs to 319 residues: Acetyl-coenzyme A carboxylase carboxyl transferase subunit alpha (319 aa).

A CoA carboxyltransferase C-terminal domain is found at 35-296 (NIDEEVHRLR…KAQLLADLAD (262 aa)).

Belongs to the AccA family. Acetyl-CoA carboxylase is a heterohexamer composed of biotin carboxyl carrier protein (AccB), biotin carboxylase (AccC) and two subunits each of ACCase subunit alpha (AccA) and ACCase subunit beta (AccD).

It localises to the cytoplasm. It carries out the reaction N(6)-carboxybiotinyl-L-lysyl-[protein] + acetyl-CoA = N(6)-biotinyl-L-lysyl-[protein] + malonyl-CoA. The protein operates within lipid metabolism; malonyl-CoA biosynthesis; malonyl-CoA from acetyl-CoA: step 1/1. Component of the acetyl coenzyme A carboxylase (ACC) complex. First, biotin carboxylase catalyzes the carboxylation of biotin on its carrier protein (BCCP) and then the CO(2) group is transferred by the carboxyltransferase to acetyl-CoA to form malonyl-CoA. The protein is Acetyl-coenzyme A carboxylase carboxyl transferase subunit alpha of Escherichia coli O127:H6 (strain E2348/69 / EPEC).